Consider the following 126-residue polypeptide: uncharacterized protein (126 aa).

The interval 1 to 46 is disordered; the sequence is MREEEAAAVVTVPQAGRDGEQPGPPAGLGCAAVRGEPGGGGPQESR.

The protein localises to the cytoplasm. It is found in the cytoskeleton. It localises to the cilium basal body. This is an uncharacterized protein from Bos taurus (Bovine).